A 434-amino-acid chain; its full sequence is V-type ATP synthase beta chain (434 aa).

The protein belongs to the ATPase alpha/beta chains family.

Functionally, produces ATP from ADP in the presence of a proton gradient across the membrane. The V-type beta chain is a regulatory subunit. The protein is V-type ATP synthase beta chain (atpB) of Borreliella burgdorferi (strain ATCC 35210 / DSM 4680 / CIP 102532 / B31) (Borrelia burgdorferi).